We begin with the raw amino-acid sequence, 801 residues long: Glycerol-3-phosphate acyltransferase 2, mitochondrial (801 aa).

The disordered stretch occupies residues 1–24; the sequence is METMLKSNPQMQQRNNHSGQETSL. At 1-305 the chain is on the cytoplasmic side; that stretch reads METMLKSNPQ…PGPRLSALGQ (305 aa). Positions 180 to 290 are acyltransferase; it reads QLHKGQMKMV…SGQPLLIFLE (111 aa). An HXXXXD motif motif is present at residues 205-210; sequence HKSLLD. A helical transmembrane segment spans residues 306 to 332; that stretch reads AWLGLVVQAVQAGIVPDATLVPVATAY. Topologically, residues 333–449 are mitochondrial intermembrane; that stretch reads DLVPDAPCNM…QLLVRRLSRH (117 aa). Residues 450 to 472 traverse the membrane as a helical segment; that stretch reads VLSASVASSAVMSTAIMATLLLL. Over 473–795 the chain is Cytoplasmic; the sequence is KHQKGVVLSQ…DNQDKLEQFI (323 aa).

This sequence belongs to the GPAT/DAPAT family. Interacts with PIWIL2. In terms of tissue distribution, expressed in spermatocytes and spermatides.

The protein resides in the mitochondrion outer membrane. The catalysed reaction is sn-glycerol 3-phosphate + an acyl-CoA = a 1-acyl-sn-glycero-3-phosphate + CoA. It carries out the reaction a 1-acyl-sn-glycero-3-phosphate + an acyl-CoA = a 1,2-diacyl-sn-glycero-3-phosphate + CoA. The enzyme catalyses 1-(9Z-octadecenoyl)-sn-glycero-3-phosphate + (9Z)-octadecenoyl-CoA = 1,2-di-(9Z-octadecenoyl)-sn-glycero-3-phosphate + CoA. It catalyses the reaction 1-(9Z-octadecenoyl)-sn-glycero-3-phosphate + (5Z,8Z,11Z,14Z)-eicosatetraenoyl-CoA = 1-(9Z)-octadecenoyl-2-(5Z,8Z,11Z,14Z)-eicosatetraenoyl-sn-glycero-3-phosphate + CoA. The catalysed reaction is (5Z,8Z,11Z,14Z)-eicosatetraenoyl-CoA + sn-glycerol 3-phosphate = 1-(5Z,8Z,11Z,14Z-eicosatetraenoyl)-sn-glycero-3-phosphate + CoA. It functions in the pathway phospholipid metabolism; CDP-diacylglycerol biosynthesis; CDP-diacylglycerol from sn-glycerol 3-phosphate: step 1/3. Its activity is regulated as follows. Inhibited by N-ethylmaleimide (NEM). Transfers an acyl-group from acyl-ACP to the sn-1 position of glycerol-3-phosphate producing a lysophosphatidic acid (LPA), an essential step for the triacylglycerol (TAG) and glycerophospholipids. In vitro also transfers an acyl-group from acyl-ACP to the LPA producing a phosphatidic acid (PA). Prefers arachidonoyl-CoA as the acyl donor. Required for primary processing step during piRNA biosynthesis. Molecular mechanisms by which it promotes piRNA biosynthesis are unclear and do not involve its acyltransferase activity. This chain is Glycerol-3-phosphate acyltransferase 2, mitochondrial, found in Rattus norvegicus (Rat).